We begin with the raw amino-acid sequence, 358 residues long: MVPVLKKYKAAAVNAEPGWFDLQESVRRTIHWIDEAGKAGCKLIAFPELWIPGYPYWAWKVNYQESLPLLKKYRENSLPSDSDEMRRIREAAKANKIWVSLGYSELDLASLYTTQIMISPAGDVINHRRKIKATHVERLVFGDGTGDTTESVMDTEIGRIGHLNCWENMNPFLKAYAASLGEQVHIAAWPLYPGKETLKYPDPYTNVAEANADLVTPAYAIETGSFTLAPWQTITAEGIKLNTPPGKELEDPNIYNGNGRIFGPDGQNLVPHPDKDFQGLLFVDIDLDEIHLTKSLADFGGHYMRPDLIRLLVDTNRKDLVVHEDRVNGGVAYTRTIDRVGLSAPLDASATEAQSESV.

Residues 8-287 (YKAAAVNAEP…QGLLFVDIDL (280 aa)) enclose the CN hydrolase domain. The active-site Proton acceptor is E48. K130 is an active-site residue. The Nucleophile role is filled by C165.

This sequence belongs to the carbon-nitrogen hydrolase superfamily. Nitrilase family. In terms of assembly, oligomer of dimers, forming left-handed helical fibers.

It carries out the reaction formamide = hydrogen cyanide + H2O. Functionally, catalyzes the hydration of cyanide to formamide. Degradation of cyanide may be important for plant pathogenic fungi in infection of cyanogenic plants. The protein is Cyanide hydratase of Penicillium rubens (strain ATCC 28089 / DSM 1075 / NRRL 1951 / Wisconsin 54-1255) (Penicillium chrysogenum).